Reading from the N-terminus, the 230-residue chain is MTNAALDDKTIVRDYFNSTGFDRWRRIYGDGQVNFVQKDIRVGHQQTVDSVVAWLVADGNLPGLLVCDAGCGVGSLSIPLAQAGALVYGSDISEKMVGEAQQKAQEVLAYGNQPTFMTQDLAQLGGKYDTVICLDVLIHYPTEEASAMISHLASLADRRLILSFAPKTLGLTVLKKIGGLFPGPSKTTRAYQHKEADIRKILGDNGFSIARTGMTSTRFYYSRILEAVRS.

This sequence belongs to the class I-like SAM-binding methyltransferase superfamily. Magnesium protoporphyrin O-methyltransferase family.

The enzyme catalyses Mg-protoporphyrin IX + S-adenosyl-L-methionine = Mg-protoporphyrin IX 13-monomethyl ester + S-adenosyl-L-homocysteine. It functions in the pathway porphyrin-containing compound metabolism; chlorophyll biosynthesis (light-independent). Functionally, converts Mg-protoporphyrin IX to Mg-protoporphyrin IX methylester using S-adenosyl-L-methionine as a cofactor. The chain is Magnesium-protoporphyrin O-methyltransferase (chlM) from Synechocystis sp. (strain ATCC 27184 / PCC 6803 / Kazusa).